Reading from the N-terminus, the 281-residue chain is Lipoyl synthase (281 aa).

C37, C42, C48, C63, C67, C70, and S274 together coordinate [4Fe-4S] cluster. Residues 49-263 (WSRGTATFMI…RQQAVNKGFK (215 aa)) enclose the Radical SAM core domain.

Belongs to the radical SAM superfamily. Lipoyl synthase family. The cofactor is [4Fe-4S] cluster.

It is found in the cytoplasm. The catalysed reaction is [[Fe-S] cluster scaffold protein carrying a second [4Fe-4S](2+) cluster] + N(6)-octanoyl-L-lysyl-[protein] + 2 oxidized [2Fe-2S]-[ferredoxin] + 2 S-adenosyl-L-methionine + 4 H(+) = [[Fe-S] cluster scaffold protein] + N(6)-[(R)-dihydrolipoyl]-L-lysyl-[protein] + 4 Fe(3+) + 2 hydrogen sulfide + 2 5'-deoxyadenosine + 2 L-methionine + 2 reduced [2Fe-2S]-[ferredoxin]. It participates in protein modification; protein lipoylation via endogenous pathway; protein N(6)-(lipoyl)lysine from octanoyl-[acyl-carrier-protein]: step 2/2. Catalyzes the radical-mediated insertion of two sulfur atoms into the C-6 and C-8 positions of the octanoyl moiety bound to the lipoyl domains of lipoate-dependent enzymes, thereby converting the octanoylated domains into lipoylated derivatives. The protein is Lipoyl synthase of Parabacteroides distasonis (strain ATCC 8503 / DSM 20701 / CIP 104284 / JCM 5825 / NCTC 11152).